The primary structure comprises 1083 residues: Ubiquitin-protein ligase E3C (1083 aa).

Basic and acidic residues-rich tracts occupy residues 1-10 and 20-40; these read MFSFEGDFKT and SRKE…RKRE. The tract at residues 1-40 is disordered; it reads MFSFEGDFKTRPKVSLGGASRKEEKASLLHRTQEERRKRE. The interval 1-60 is cis-determinant of acceptor ubiquitin-binding; the sequence is MFSFEGDFKTRPKVSLGGASRKEEKASLLHRTQEERRKREEERRRLKNAVIIQSFIRGYR. An IQ domain is found at 45–74; that stretch reads RLKNAVIIQSFIRGYRDRKQQYFIQRSAFD. The segment at 354–386 is disordered; that stretch reads ASPTGTGCPDSTSDSEDDNEETDQPNSPEDGRV. Positions 366-376 are enriched in acidic residues; sequence SDSEDDNEETD. Positions 744-1083 constitute an HECT domain; that stretch reads NEPDLKKRIR…IECAAGFELS (340 aa). A Glycyl lysine isopeptide (Lys-Gly) (interchain with G-Cter in ubiquitin); by autocatalysis cross-link involves residue Lys903. The active-site Glycyl thioester intermediate is the Cys1051.

This sequence belongs to the UBE3C family. As to quaternary structure, interacts with 26S proteasomes. Interacts (via the HECT domain) with UBE2D1 and, less efficiently, with UBE2L3. Post-translationally, autoubiquitinated; promoting its own degradation.

The catalysed reaction is S-ubiquitinyl-[E2 ubiquitin-conjugating enzyme]-L-cysteine + [acceptor protein]-L-lysine = [E2 ubiquitin-conjugating enzyme]-L-cysteine + N(6)-ubiquitinyl-[acceptor protein]-L-lysine.. Its pathway is protein modification; protein ubiquitination. Its function is as follows. E3 ubiquitin-protein ligase that specifically catalyzes 'Lys-29'- and 'Lys-48'-linked polyubiquitin chains. Accepts ubiquitin from the E2 ubiquitin-conjugating enzyme UBE2D1 in the form of a thioester and then directly transfers the ubiquitin to targeted substrates. Associates with the proteasome and promotes elongation of ubiquitin chains on substrates bound to the 26S proteasome. Also catalyzes 'Lys-29'- and 'Lys-48'-linked ubiquitination of 26S proteasome subunit ADRM1/RPN13 in response to proteotoxic stress, impairing the ability of the proteasome to bind and degrade ubiquitin-conjugated proteins. Acts as a negative regulator of autophagy by mediating 'Lys-29'- and 'Lys-48'-linked ubiquitination of PIK3C3/VPS34, promoting its degradation. Can assemble unanchored poly-ubiquitin chains in either 'Lys-29'- or 'Lys-48'-linked polyubiquitin chains; with some preference for 'Lys-48' linkages. Acts as a negative regulator of type I interferon by mediating 'Lys-48'-linked ubiquitination of IRF3 and IRF7, leading to their degradation by the proteasome. Catalyzes ubiquitination and degradation of CAND2. This chain is Ubiquitin-protein ligase E3C, found in Mus musculus (Mouse).